A 361-amino-acid chain; its full sequence is Chorismate synthase (361 aa).

The segment at 37–59 (TEEDLQHDLDRRRPGTSRYTTPR) is disordered. A compositionally biased stretch (basic and acidic residues) spans 40 to 49 (DLQHDLDRRR). Residues R48 and R54 each contribute to the NADP(+) site. FMN is bound by residues 125-127 (RSS), 238-239 (NA), G278, 293-297 (KPTSS), and R319.

It belongs to the chorismate synthase family. As to quaternary structure, homotetramer. The cofactor is FMNH2.

The catalysed reaction is 5-O-(1-carboxyvinyl)-3-phosphoshikimate = chorismate + phosphate. Its pathway is metabolic intermediate biosynthesis; chorismate biosynthesis; chorismate from D-erythrose 4-phosphate and phosphoenolpyruvate: step 7/7. Its function is as follows. Catalyzes the anti-1,4-elimination of the C-3 phosphate and the C-6 proR hydrogen from 5-enolpyruvylshikimate-3-phosphate (EPSP) to yield chorismate, which is the branch point compound that serves as the starting substrate for the three terminal pathways of aromatic amino acid biosynthesis. This reaction introduces a second double bond into the aromatic ring system. This chain is Chorismate synthase, found in Erwinia tasmaniensis (strain DSM 17950 / CFBP 7177 / CIP 109463 / NCPPB 4357 / Et1/99).